The following is a 1503-amino-acid chain: MTQQGPAEFTPPPECPVFEPSWEEFKDPFAFINKIRPIAEKTGICKVRPPPDWQPPFACDVDRLHFTPRIQRLNELEAQTRVKLNFLDQIAKFWDLQGCTLKIPHVERKILDLYQLNKLVADEGGFDLVCRERRWTKIAMTMGFAPGKAVGSHLRAHYERILYPYNLFQSGTNLLCLQKPGDEVNDIDKEYKPHDLLQRQNVPLQPSNTSAPARRAKRMKTESGCIKSEEGEGVENKPNLRRRMGSFVVKTEPKKEIPIQVKEEPVEIKELNPEPEKSKPKKKNIPPPPVSMVDLYVCLVCGKGNDEDRLLLCDGCDDSYHTFCLIPPLTDVPKGDWRCPKCLTQECCKPQEAFGFEQAHRDYTLKAFGEMADSFKSDYFNMPVHMVPTELVEKEFWRLVGTIQEDVTVEYGADIASKEFGSGFPIKGGRFKIAPHDEKYLQCGWNLNNMAMMTPSVLTHVTADICGMTLPWLYVGMCFSSFCWHIEDHWSYSINYLHWGEPKTWYGAPGFAAEQLEAVMKKLAPELFDSQPDLLHQLVTIMNPNTLMAHGVPIYRTNQCAGEFVITFPRSYHSGFNQGFNFAEAVNFCTVDWMPLGRQCVDHYRQLHRYCVFSHDEMVCNMAMKADCLDVVLASAVQKDMQLMIKEERELREKVRKMGVAQCELFQYDLLADDERQCVKCRTTCYLSALTCPCRPGVQVCLYHTHDLCSCPISNYTLNYRFTLDDLYPMMNAVRQRAEYYDDWASRVTEVMEAKLDKKRNVTVFRTLLEESNEQSFPENDLLRQLRLVTQDAEKCSSVAQQLLNGKRQTRYRTGKAKSPNQLTVEEMRSFVRQLYNLPCSLTQAPLLKELLNSIEDFQQHSEKLLSDEVSADAVSEIESLLEEGSQFDVFLPELPLLRERLEQARWLTGVHQAEDPVANPCGLSLESMRRLIDRGVGLTPHPSIERMMARLQELLTVSEELEENAQALLKARPPESLETLCSMLTQVEGVPAYLPNCLLLQDTVNRAKEWLQEAESLQVGGQVPVFSSLSDMVLRAHSIPVRLEPLDQLEVQVSEVQSWKETAAKTFLIKSSPFTLLEVLCPRWEMGSSLKKKKMRKMKGDCVSSGKKKFVKLDSMSDVERALSDSKDSASAMFTLAEVRLKELESLCSLRASNESKLLPTADCASLKVCVCQKPAMGAMLQCELCRDAFHSVCVRGPSDPLDPEAWLCPLCLRSTKPPLDKIRSLLSSLQRIRVRLPEGDALRYMIERSVSWQRRVREVIDSYGLSSTSQDGRGASPSQNLYRSTGHSRKLQLCGSPSRCQDWAVSGQEQTVFYTEQRCIPLQGLSPELEELMVEGLVLQVSLPETQQLYRLLLSGPPTTNTSHAEHKSYLTPPQTETDAITSAEKKAKRRMNRDEVDIRERGTKLKSKKQRMMGVEKRRERKAASVSASDMSQSEDSEEDMTLCPAESCLQPEGEEVDWVQCDCCNRWFHMICVGVSAELAAEEDYMCVSCSTSHMDRRK.

The 42-residue stretch at 15 to 56 (CPVFEPSWEEFKDPFAFINKIRPIAEKTGICKVRPPPDWQPP) folds into the JmjN domain. Residues 80–170 (TRVKLNFLDQ…ILYPYNLFQS (91 aa)) form the ARID domain. Residues 202 to 211 (VPLQPSNTSA) show a composition bias toward polar residues. Disordered stretches follow at residues 202 to 223 (VPLQ…KTES) and 268 to 287 (IKEL…NIPP). A compositionally biased stretch (basic and acidic residues) spans 268 to 278 (IKELNPEPEKS). The segment at 295–345 (LYVCLVCGKGNDEDRLLLCDGCDDSYHTFCLIPPLTDVPKGDWRCPKCLTQ) adopts a PHD-type 1 zinc-finger fold. In terms of domain architecture, JmjC spans 439–605 (KYLQCGWNLN…LGRQCVDHYR (167 aa)). 3 residues coordinate Fe cation: histidine 485, aspartate 488, and histidine 573. A PHD-type 2 zinc finger spans residues 1168-1216 (LKVCVCQKPAMGAMLQCELCRDAFHSVCVRGPSDPLDPEAWLCPLCLRS). 2 disordered regions span residues 1362-1381 (TNTS…TETD) and 1403-1442 (ERGT…DSEE). The PHD-type 3 zinc-finger motif lies at 1444–1497 (MTLCPAESCLQPEGEEVDWVQCDCCNRWFHMICVGVSAELAAEEDYMCVSCSTS).

The protein belongs to the JARID1 histone demethylase family. The cofactor is Fe(2+).

The protein resides in the nucleus. The enzyme catalyses N(6),N(6),N(6)-trimethyl-L-lysyl(4)-[histone H3] + 3 2-oxoglutarate + 3 O2 = L-lysyl(4)-[histone H3] + 3 formaldehyde + 3 succinate + 3 CO2. Functionally, histone demethylase that demethylates 'Lys-4' of histone H3, thereby playing a central role in histone code. Does not demethylate histone H3 'Lys-9' or H3 'Lys-27'. Demethylates trimethylated, dimethylated and monomethylated H3 'Lys-4'. Acts as a transcriptional corepressor. The polypeptide is Lysine-specific demethylase 5B-B (kdm5bb) (Danio rerio (Zebrafish)).